The following is a 116-amino-acid chain: Dynein light chain Tctex-type 3 (116 aa).

Position 4 is a 3'-nitrotyrosine (tyrosine 4).

This sequence belongs to the dynein light chain Tctex-type family. In terms of assembly, homodimer. The cytoplasmic dynein 1 complex consists of two catalytic heavy chains (HCs) and a number of non-catalytic subunits presented by intermediate chains (ICs), light intermediate chains (LICs) and light chains (LCs); the composition seems to vary in respect to the IC, LIC and LC composition. The heavy chain homodimer serves as a scaffold for the probable homodimeric assembly of the respective non-catalytic subunits. The ICs and LICs bind directly to the HC dimer and the LCs assemble on the IC dimer. DYNLT1 and DYNLT3 compete for association with dynein IC (DYNC1I1 or DYNC1I2). Self-associates. Interacts with DYNC1I1 and DYNC1I2. Interacts with BUB3. Interacts with SATB1 in nucleus to form complex with matrix attachment regions (MARs) of DNA.

It is found in the nucleus. The protein localises to the cytoplasm. Its subcellular location is the cytoskeleton. The protein resides in the chromosome. It localises to the centromere. It is found in the kinetochore. Acts as one of several non-catalytic accessory components of the cytoplasmic dynein 1 complex that are thought to be involved in linking dynein to cargos and to adapter proteins that regulate dynein function. Cytoplasmic dynein 1 acts as a motor for the intracellular retrograde motility of vesicles and organelles along microtubules. Probably binds BUB3 as part of transport cargo. Required for the efficient progression through mitosis. The sequence is that of Dynein light chain Tctex-type 3 (DYNLT3) from Canis lupus familiaris (Dog).